We begin with the raw amino-acid sequence, 375 residues long: Tyrosine--tRNA ligase (375 aa).

Positions 37, 168, 172, 175, and 190 each coordinate L-tyrosine. Residues K251–S255 carry the 'KMSKS' region motif. K254 provides a ligand contact to ATP.

The protein belongs to the class-I aminoacyl-tRNA synthetase family. TyrS type 4 subfamily. Homodimer.

Its subcellular location is the cytoplasm. The enzyme catalyses tRNA(Tyr) + L-tyrosine + ATP = L-tyrosyl-tRNA(Tyr) + AMP + diphosphate + H(+). In terms of biological role, catalyzes the attachment of tyrosine to tRNA(Tyr) in a two-step reaction: tyrosine is first activated by ATP to form Tyr-AMP and then transferred to the acceptor end of tRNA(Tyr). This Thermococcus gammatolerans (strain DSM 15229 / JCM 11827 / EJ3) protein is Tyrosine--tRNA ligase.